A 464-amino-acid chain; its full sequence is NADH-quinone oxidoreductase subunit N 1 (464 aa).

The next 14 membrane-spanning stretches (helical) occupy residues 6 to 26, 33 to 53, 65 to 85, 98 to 118, 122 to 142, 155 to 175, 192 to 212, 237 to 257, 259 to 279, 285 to 305, 312 to 332, 356 to 376, 401 to 421, and 436 to 456; these read ILPEAILAIGILTVFILELFL, FLSVLAFIFVVLSGYSIFFVN, VDALNLIGKLFILAVTGFVLL, YGELPYLYLIATLGLMVMISS, AIIFTGLELASITMYILVGLF, YLVIGTTGTSMYALGSALVYA, FALGVILIISALALKVSAVPF, IGMYFLFVKLTMYLFSAFPDW, YVVMLLAVLSMFYGNIVAYAQ, LLAYSSIAHAGYFLTALTAVD, LLFYVFVYALATVGAFTVLAI, LASMLALFLFALIGIPPAAVF, ASLISAGYYLKVIVYMFLYSG, and FTVLGTAFLVIFFGLFPHVVL.

The protein belongs to the complex I subunit 2 family. NDH-1 is composed of 14 different subunits. Subunits NuoA, H, J, K, L, M, N constitute the membrane sector of the complex.

The protein resides in the cell inner membrane. It carries out the reaction a quinone + NADH + 5 H(+)(in) = a quinol + NAD(+) + 4 H(+)(out). Functionally, NDH-1 shuttles electrons from NADH, via FMN and iron-sulfur (Fe-S) centers, to quinones in the respiratory chain. The immediate electron acceptor for the enzyme in this species is believed to be ubiquinone. Couples the redox reaction to proton translocation (for every two electrons transferred, four hydrogen ions are translocated across the cytoplasmic membrane), and thus conserves the redox energy in a proton gradient. This Aquifex aeolicus (strain VF5) protein is NADH-quinone oxidoreductase subunit N 1.